The primary structure comprises 333 residues: Uroporphyrinogen decarboxylase (333 aa).

Substrate-binding positions include 21–25, aspartate 70, tyrosine 139, serine 194, and histidine 309; that span reads RQVGR.

It belongs to the uroporphyrinogen decarboxylase family. In terms of assembly, homodimer.

It localises to the cytoplasm. The catalysed reaction is uroporphyrinogen III + 4 H(+) = coproporphyrinogen III + 4 CO2. Its pathway is porphyrin-containing compound metabolism; protoporphyrin-IX biosynthesis; coproporphyrinogen-III from 5-aminolevulinate: step 4/4. Its function is as follows. Catalyzes the decarboxylation of four acetate groups of uroporphyrinogen-III to yield coproporphyrinogen-III. In Chlamydia abortus (strain DSM 27085 / S26/3) (Chlamydophila abortus), this protein is Uroporphyrinogen decarboxylase.